Here is a 215-residue protein sequence, read N- to C-terminus: 3-dehydroquinate dehydratase (215 aa).

Residues 27 to 29 (EVR) and Arg-54 each bind 3-dehydroquinate. Catalysis depends on His-112, which acts as the Proton donor/acceptor. The active-site Schiff-base intermediate with substrate is the Lys-139. Arg-176 and Gln-198 together coordinate 3-dehydroquinate.

It belongs to the type-I 3-dehydroquinase family. Homodimer.

The catalysed reaction is 3-dehydroquinate = 3-dehydroshikimate + H2O. It functions in the pathway metabolic intermediate biosynthesis; chorismate biosynthesis; chorismate from D-erythrose 4-phosphate and phosphoenolpyruvate: step 3/7. In terms of biological role, involved in the third step of the chorismate pathway, which leads to the biosynthesis of aromatic amino acids. Catalyzes the cis-dehydration of 3-dehydroquinate (DHQ) and introduces the first double bond of the aromatic ring to yield 3-dehydroshikimate. The sequence is that of 3-dehydroquinate dehydratase from Thermococcus onnurineus (strain NA1).